The following is a 1847-amino-acid chain: Peripheral-type benzodiazepine receptor-associated protein 1 (1847 aa).

Disordered regions lie at residues 57–81 (EESS…GTET), 282–318 (NQRE…EDDV), and 560–626 (SGPK…DTAS). Composition is skewed to low complexity over residues 294-310 (GSTA…GAPG) and 600-613 (SLSN…IHNS). The 68-residue stretch at 651 to 718 (ARIQVFLARY…PSNFVERVSD (68 aa)) folds into the SH3 1 domain. The segment at 728–787 (ELADSSHSSGPELSFLSGGGGGCSSGGQSSGGRSQPRPEEEATGDELSLSPPPEGLGEPL) is disordered. A compositionally biased stretch (gly residues) spans 744–757 (SGGGGGCSSGGQSS). Fibronectin type-III domains lie at 789–880 (VPYP…AGAG), 882–974 (VPSQ…TLPA), and 979–1077 (APLD…PALA). Disordered regions lie at residues 1107–1174 (LGYT…EGPD), 1191–1215 (DAGP…VCHR), 1240–1307 (NSLV…ILEQ), 1322–1478 (FSIP…ESSL), and 1514–1616 (PTDG…SHQD). Residues 1122–1133 (TQDSPASLSTEM) are compositionally biased toward polar residues. The span at 1203–1215 (LTQKEPSTEVCHR) shows a compositional bias: basic and acidic residues. A compositionally biased stretch (acidic residues) spans 1253-1266 (DIQEEEEEEEEEEE). Residues 1272 to 1284 (WSFQKQVAGNSIG) show a composition bias toward polar residues. 2 stretches are compositionally biased toward acidic residues: residues 1296–1305 (CETDSDEEIL) and 1325–1335 (PEEEEEEDEEE). Residues 1340-1352 (PGPSSSSQDPSQP) show a composition bias toward low complexity. Composition is skewed to basic and acidic residues over residues 1412–1421 (RPQDPREHCS) and 1546–1578 (AWEK…ESRG). Positions 1617-1685 (LPLRVFVALF…PCNMVAEVAV (69 aa)) constitute an SH3 2 domain. Disordered regions lie at residues 1701–1747 (PPNV…PGPP) and 1818–1847 (LEGP…RVQC). The SH3 3 domain maps to 1756–1823 (KTSRPMVAAF…PSNFLEGPGP (68 aa)).

This sequence belongs to the RIMBP family. In terms of assembly, interacts with RIMS1 and RIMS2. Interacts with TSPO. Interacts with CACNA1A. As to expression, specifically expressed in brain. High expression level in the limbic system such as the nucleus accumbens, septum, and hippocampus, as well as on the cerebellum and pineal gland. Abundant in the CA1 region of the hippocampus.

It is found in the cytoplasm. The protein localises to the mitochondrion. Its function is as follows. Required for synaptic transmission regulation. It probably controls the recruitement of voltage-gated calcium channels to the presynaptic membrane, and modulates neurotransmitter release. In Rattus norvegicus (Rat), this protein is Peripheral-type benzodiazepine receptor-associated protein 1.